Consider the following 273-residue polypeptide: HMP-PP phosphatase (273 aa).

Residue Asp8 is the Nucleophile of the active site. 3 residues coordinate Mg(2+): Asp8, Asp10, and Asp212.

It belongs to the HAD-like hydrolase superfamily. Cof family. Mg(2+) serves as cofactor.

The catalysed reaction is 4-amino-2-methyl-5-(diphosphooxymethyl)pyrimidine + H2O = 4-amino-2-methyl-5-(phosphooxymethyl)pyrimidine + phosphate + H(+). Its function is as follows. Catalyzes the hydrolysis of 4-amino-2-methyl-5-hydroxymethylpyrimidine pyrophosphate (HMP-PP) to 4-amino-2-methyl-5-hydroxymethylpyrimidine phosphate (HMP-P). This Yersinia pseudotuberculosis serotype IB (strain PB1/+) protein is HMP-PP phosphatase.